We begin with the raw amino-acid sequence, 130 residues long: Early E3B 14.5 kDa protein (130 aa).

A signal peptide spans 1 to 19 (MKRIVTFVLLIFCALPVLC). The chain crosses the membrane as a helical span at residues 53–77 (AWLYAIISVMVFCSTIFALAIYPYL).

Belongs to the adenoviridae E3_14 family. Phosphorylated on serine; O-glycosylated, but not N-glycosylated.

The protein localises to the host membrane. Down-regulates the EGF receptor and prevents cytolysis by TNF. This chain is Early E3B 14.5 kDa protein, found in Human adenovirus C serotype 6 (HAdV-6).